The sequence spans 950 residues: UPF0182 protein P9303_14611 (950 aa).

The next 9 membrane-spanning stretches (helical) occupy residues 20–40 (LLLS…WLWF), 53–73 (WLWQ…CQLW), 102–122 (LLGC…LAWL), 141–161 (IWAL…MLGN), 173–193 (CFCF…ALAI), 209–229 (FGLG…AQLV), 259–279 (CDVM…LLWL), 308–328 (SLAS…PWIQ), and 335–355 (LIAS…APFV).

Belongs to the UPF0182 family.

Its subcellular location is the cell membrane. In Prochlorococcus marinus (strain MIT 9303), this protein is UPF0182 protein P9303_14611.